Here is a 62-residue protein sequence, read N- to C-terminus: Protein P14 (62 aa).

Needed for optimal phage development. This chain is Protein P14 (P14), found in Pseudomonas savastanoi pv. phaseolicola (Pseudomonas syringae pv. phaseolicola).